Reading from the N-terminus, the 175-residue chain is Pathogenesis-related protein 1A1 (175 aa).

Residues 1 to 21 form the signal peptide; the sequence is MKSSIFVACFITFIIFHSSQA. An SCP domain is found at 29-146; it reads LNAHNAARRR…SGWVFITCNY (118 aa). Intrachain disulfides connect C65-C135, C108-C114, and C130-C144.

Belongs to the CRISP family.

Its function is as follows. Probably involved in the defense reaction of plants against pathogens. This Solanum lycopersicum (Tomato) protein is Pathogenesis-related protein 1A1.